The chain runs to 185 residues: uncharacterized protein (185 aa).

Component of the acid-insoluble and acid-soluble organic matrix of calcified layers of the shell (at protein level).

The protein localises to the secreted. This is an uncharacterized protein from Lottia gigantea (Giant owl limpet).